The sequence spans 489 residues: Pre-glycoprotein polyprotein GP complex (489 aa).

Gly-2 is lipidated: N-myristoyl glycine; by host. Over 2–17 (GQIVTFFQEVPHILEE) the chain is Extracellular. Residues 18–33 (VMNIVLMTLSILAILK) form a helical membrane-spanning segment. Topologically, residues 34 to 58 (GIYNVMTCGIIGLITFLFLCGRSCS) are cytoplasmic. Cys-57 is a binding site for Zn(2+). Residues 59 to 430 (SIYKDNYEFF…QSTTPLGLVD (372 aa)) are Extracellular-facing. N-linked (GlcNAc...) asparagine; by host glycans are attached at residues Asn-78, Asn-88, Asn-98, Asn-108, Asn-118, and Asn-166. Cystine bridges form between Cys-85–Cys-229, Cys-117–Cys-154, Cys-179–Cys-210, Cys-277–Cys-290, Cys-299–Cys-308, and Cys-362–Cys-383. Asn-222 is a glycosylation site (N-linked (GlcNAc...) asparagine; by host). N-linked (GlcNAc...) asparagine; by host glycosylation is found at Asn-363, Asn-371, Asn-388, and Asn-393. A helical transmembrane segment spans residues 431 to 451 (LFVFSTSFYLISVFLHLIKIP). Residues 452–489 (THRHIKGKPCPKPHRLNHMAICSCGFYKQPGLPTQWKR) lie on the Cytoplasmic side of the membrane. Residues His-453, His-455, Cys-461, His-465, Cys-473, and Cys-475 each coordinate Zn(2+).

Belongs to the arenaviridae GPC protein family. As to quaternary structure, interacts with glycoprotein G2. Part of the GP complex (GP-C) together with glycoprotein G1 and glycoprotein G2. The GP-complex interacts with protein Z, which interacts with ribonucleocapsid; these interactions may induce virion budding. Homotrimer; disulfide-linked. In pre-fusion state, G1 homotrimers bind G2 homotrimers via ionic interactions. Part of the GP complex (GP-C) together with glycoprotein G2 and the stable signal peptide. The GP-complex interacts with protein Z, which interacts with ribonucleocapsid; these interactions may induce virion budding. In terms of assembly, homotrimer. Interacts with the stable signal peptide. In pre-fusion state, G2 homotrimers bind G1 homotrimers via ionic interactions. Part of the GP complex (GP-C) together with glycoprotein G1 and the stable signal peptide. Acidification in the endosome triggers rearrangements, which ultimately leads to a 6 helix bundle formed by the two heptad repeat domains (HR1 and HR2) in post-fusion state. The GP-complex interacts with protein Z, which interacts with ribonucleocapsid; these interactions may induce virion budding. Specific enzymatic cleavages in vivo yield mature proteins. GP-C polyprotein is cleaved in the endoplasmic reticulum by the host protease MBTPS1. Only cleaved glycoprotein is incorporated into virions. In terms of processing, the SSP remains stably associated with the GP complex following cleavage by signal peptidase and plays crucial roles in the trafficking of GP through the secretory pathway. Post-translationally, myristoylation is necessary for GP2-mediated fusion activity.

The protein localises to the virion membrane. It is found in the host endoplasmic reticulum membrane. It localises to the host Golgi apparatus membrane. The protein resides in the host cell membrane. In terms of biological role, functions as a cleaved signal peptide that is retained as the third component of the GP complex (GP-C). Helps to stabilize the spike complex in its native conformation. The SSP is required for efficient glycoprotein expression, post-translational maturation cleavage of G1 and G2, glycoprotein transport to the cell surface plasma membrane, formation of infectious virus particles, and acid pH-dependent glycoprotein-mediated cell fusion. Its function is as follows. Forms the virion spikes together with glycoprotein G2. The glycoprotein spike trimers are connected to the underlying matrix. Interacts with the host receptor leading to virus endocytosis. Functionally, forms the virion spikes together with glycoprotein G1. The glycoprotein spike trimers are connected to the underlying matrix. Class I viral fusion protein that directs fusion of viral and host endosomal membranes, leading to delivery of the nucleocapsid into the cytoplasm. Membrane fusion is mediated by irreversible conformational changes induced by acidification. In Mastomys natalensis (African soft-furred rat), this protein is Pre-glycoprotein polyprotein GP complex.